We begin with the raw amino-acid sequence, 1378 residues long: MIKVTIFLLLSIFSFNLYGLELNEKVSIKYGAEQGVGSADSNTKLCSDILKYLYMDEYLSEGDKATFEKKCHNVIGNIRNTFSNKNTIKEGNEFLMSILHMKSLYGNNNNNNAGSESDVTLKSLYLSLKGSQNTEGESEVPSDDEINKTIMNFVKFNKYLLDNSNDIKKVHDFLVLTSQSNENLLPNKEKLFEQIVDQIKYFDEYFFASGGKIKVKKGYLKYNFLDIYKQPVCSAYLHLCSRYYESVSIYIRLKKVFNGIPAFLDKNCRKVKGEEFKKLMDMELKHNHIVERFDKYIISDDLYYVNMKVFDLKNVDKIQVSKIDDINNLNIYEHKETMHLSAKNLSRYIDIKKELNDEKAYKQLMSAIRKYVTTLTKADSDITYFVKQLDDEEIERFLIDLNFFLYNGFLRITEDKHLINADDVSPSYINLYRSNNIVALYILKTQYEENKLSEYRAHKFYRRKRVSNITNDMIKKDFTQTNALTNLPNLDNKKTTEYYLKEYENFVENFQPDLHDIMKLQLFFTMAFKDCNVNQNFTETSKKLWFDLLYAYDKFGWFYIHPNEVINSINKTDFVRHVLVSRNFLLKNNDQLTFLETQVAKIVEIINLSLEVDKSPDSLDFSIPMNFFNHKNGYHVMNDDKLKLLTSYEYIDSIANNYFFLSEYKNDVFRTGNNFKLYFNLPNIYSLAYQLFNELAININVITNVPLKKYLKYNASYAYFTLMNMIGKNHDIYSKGSRFVYASYILGLVFFIESHIDIARLKPKDFFFMKQSLPIIDHVYHKDLKTLKKNCTLLTDFMKINKNSQNYSLTHTEEMIKILGLLTVTLWAKEGKKSVYYDDDVSLYRKLMVSCVFNGGETIQEKLANNIEKSCDISQYGIKSKNLKDMIDINLSIHKWNPAEIEKLAYSFVLSCKMQKLMYKPMNVEKLPLEDYYKLSLAPDMVKTYHCYKLGKQAAELLESIILKKKFVRFRVTDAIDVYDFFYIKKVLSSRIKKEYNEFLQDKRAFEKKELETILNNSPFSEEQTMKLINSYECHWFTSYENFRILWMHASSNLGTGTYLKNFFSELWQNIRFLFKSKLKIRDMEYFSGDISQMNLLDYYSPMVHSESHCQEKMQVLFITLRDSKEENRSEIAQKVKSAYYQCKLDYYKNHHSDFIHRIHPNDFLNNKVYVLKQPYYLMSNVPLNNPKKVSRLFVTEGTLEYLLLDKINIPECFGPCTKLHFNKVVIKESKQRIYDMTINNALVPEIQPYNRRKYMTIYINEAYIKNIVSDALTSEEIKRHDIQKGNIKICMGKSTYLTEPILTEEHFNLTHKPVYDFSSVKHNLKVFHMKNEHLVSEDPNDDCFINYPLATINLDISDPYKEISEDLIKNLYILKSS.

Positions 1 to 19 (MIKVTIFLLLSIFSFNLYG) are cleaved as a signal peptide. Disulfide bonds link cysteine 46–cysteine 71 and cysteine 233–cysteine 240. The helical transmembrane segment at 739 to 759 (FVYASYILGLVFFIESHIDIA) threads the bilayer. Cystine bridges form between cysteine 791/cysteine 851, cysteine 871/cysteine 912, and cysteine 947/cysteine 1034.

As to quaternary structure, component of the RhopH complex. RhopH complex is composed of CLAG3.1/CLAG3.2, RhopH2 and RhopH3 with a 1:1:1 subunit stoichiometry. Interacts with CLAG3.1/CLAG3.2.

It is found in the host cell membrane. The protein resides in the parasitophorous vacuole membrane. The protein localises to the host cytoplasm. Its subcellular location is the cytoplasm. It localises to the cytoplasmic vesicle. It is found in the secretory vesicle. The protein resides in the rhoptry. Participates in the formation of new permeability pathways in Plasmodium-infected erythrocytes enabling the uptake of nutrients from the blood plasma. Required for maintaining invasion capacity of merozoites. Required for parasite growth and proliferation. The polypeptide is High molecular weight rhoptry protein 2 (Plasmodium falciparum (isolate 3D7)).